The primary structure comprises 448 residues: FAD-dependent monooxygenase srdH (448 aa).

Residues glutamate 32 and arginine 107 each coordinate FAD. Glutamine 227 is an active-site residue. Aspartate 313 contacts FAD.

This sequence belongs to the paxM FAD-dependent monooxygenase family. FAD serves as cofactor.

Functionally, highly reducing polyketide synthase; part of the gene cluster that mediates the biosynthesis of sordarial, a salicylic aldehyde structurally related to the phytotoxin pyriculol. The most interesting aspect of this pathway is formation of an aromatic product from the highly reducing polyketide synthase srdA. SrdA synthesizes a reduced polyketide chain from one molecule of acetyl-CoA and five molecules of malonyl-CoA. The polyketide chain is then reductively released as an aldehyde. The oxidoreductases srdC, srdD and srdE then oxidize one of the hydroxy groups to facilitate the intramolecular aldol condensation, followed by dehydration to yield a salicylic aldehyde. This aldehyde can undergo facile reduction by endogenous reductases to yield the alcohol 1-hydroxy-2-hydroxymethyl-3-pent-1,3-dienylbenzene. The flavin-dependent srdI counteract against the propensity of the aldehydes to be reduced under physiological conditions and is responsible for reoxidizing 1-hydroxy-2-hydroxymethyl-3-pent-1,3-dienylbenzene back to the salicylic aldehyde. This salicylic aldehyde is then selectively epoxidized by the cupin-domain-containing oxidoreductase srdB to yield the epoxide, which can be hydrolyzed stereoselectively by the hydrolase srdG to give the final product sordarial. This chain is FAD-dependent monooxygenase srdH, found in Neurospora crassa (strain ATCC 24698 / 74-OR23-1A / CBS 708.71 / DSM 1257 / FGSC 987).